The sequence spans 636 residues: Ketocytochalasin monooxygenase (636 aa).

FAD contacts are provided by residues Asp125, 133 to 136, Asp145, Tyr151, and Ile195; that span reads TWYW. 143–145 provides a ligand contact to NADP(+); it reads ACD. Residues 279-285, 302-303, and 420-421 contribute to the NADP(+) site; these read TGASAVQ, RT, and KR. Residue Trp534 coordinates FAD.

This sequence belongs to the FAD-binding monooxygenase family. FAD is required as a cofactor.

It catalyses the reaction ketocytochalasin + NADPH + O2 + H(+) = iso-precytochalasin + NADP(+) + H2O. The catalysed reaction is iso-precytochalasin + NADPH + O2 + H(+) = cytochalasin Z16 + NADP(+) + H2O. It functions in the pathway mycotoxin biosynthesis. Ketocytochalasin monooxygenase; part of the gene cluster that mediates the biosynthesis of a family of the mycotoxins cytochalasins E and K. The hybrid PKS-NRPS synthetase ccsA and the enoyl reductase ccsC are responsible for fusion of phenylalanine with an octaketide backbone and subsequent release of the stable tetramic acid precursor. The polyketide synthase module (PKS) of the PKS-NRPS ccsA is responsible for the synthesis of the octaketide backbone. The downstream nonribosomal peptide synthetase (NRPS) amidates the carboxyl end of the octaketide with a phenylalanine. A reductase-like domain (R) at the C-terminus catalyzes the reductive release of the polyketide-amino acid intermediate. Because ccsA lacks a designated enoylreductase (ER) domain, the required activity is provided the enoyl reductase ccsC. Upon formation of the 11-membered carbocycle-fused perhydroisoindolone intermediate, a number of oxidative steps are required to afford the final cytochalasin E and K, including two hydroxylations at C17 and C18, one alcohol oxidation at C17, one epoxidation at C6 and C7 and two Baeyer-Villiger oxidations. The oxidative modification at C17, C18 and the C6-C7 epoxidation are likely to be catalyzed by the two cytochrome P450 oxygenases ccsD and ccsG. CcsD may be responsible for the epoxidation of the C6-C7 double bond. CcsG may be responsible for the successive oxidative modifications at C17 and C18. The double Baeyer-Villiger oxidations of ketocytochalasin to precytochalasin and cytochalasin Z(16) are among the final steps leading to cytochalasin E and K and are catalyzed by ccsB. The first oxygen insertion step follows that of the classic BVMO mechanism, generating the ester precytochalasin. Release of precytochalasin into an aqueous environment can generate the shunt product iso-precytochalasin through spontaneous isomerization. Alternatively, precytochalasin can undergo further oxidation by ccsB to yield the in-line carbonate-containing cytochalasin Z(16). Cytochalasin Z(16) is a precursor to cytochalasin E and cytochalasin K, whereas iso-precytochalasin is a precursor to cytochalasin Z(17) and rosellichalasin. The hydrolyase ccsE may catalyze hydrolysis of epoxide bond in cytochalasin E to afford cytochalasin K. The function of ccsF has not been assigned but it may play a role in post-PKS-NRPS biosynthetic step, resistance or transport of cytochalasins and related PKS-NRPS products. This is Ketocytochalasin monooxygenase from Aspergillus clavatus (strain ATCC 1007 / CBS 513.65 / DSM 816 / NCTC 3887 / NRRL 1 / QM 1276 / 107).